Consider the following 108-residue polypeptide: MASFTSFCVLFTFCLLLLAHQARSGERQYKTESRNGKCVGEDDQLHAPTEVWYNDNDCSEHTCVNDDTGYYEIIRRCTLIAYPDECHMINGTGPRYPQCCCKVTCELD.

An N-terminal signal peptide occupies residues 1–24 (MASFTSFCVLFTFCLLLLAHQARS).

Belongs to the scoloptoxin-16 family. Post-translationally, contains 4 disulfide bonds. In terms of tissue distribution, expressed by the venom gland.

It localises to the secreted. This is U-scoloptoxin(16)-Er10a from Ethmostigmus rubripes (Giant centipede).